The chain runs to 869 residues: Ribonucleoside-diphosphate reductase large chain 2 (869 aa).

Residues 1 to 92 (MYVIKRDGRK…ISNLHKQTTK (92 aa)) enclose the ATP-cone domain. ATP-binding positions include 5–6 (KR), 11–17 (EPVQFDK), threonine 53, and aspartate 57. GDP contacts are provided by serine 202 and serine 217. Cysteine 218 and cysteine 443 are oxidised to a cystine. Residues 226–228 (DSI), lysine 243, arginine 256, and 263–264 (AG) each bind dTTP. Serine 227 carries the post-translational modification Phosphoserine. Lysine 387 participates in a covalent cross-link: Glycyl lysine isopeptide (Lys-Gly) (interchain with G-Cter in ubiquitin). Asparagine 426 provides a ligand contact to GDP. The active-site Proton acceptor is asparagine 426. The active-site Cysteine radical intermediate is cysteine 428. GDP-binding positions include glutamate 430 and 608–611 (TAST). Glutamate 430 (proton acceptor) is an active-site residue. Residues 793 to 843 (SALTESSDNEKDASPVPSEQSSVSSAMSNVKLEDSVAPAVPTETIKEDSDE) form a disordered region. 3 positions are modified to phosphoserine: serine 806, serine 827, and serine 868. Positions 806-820 (SPVPSEQSSVSSAMS) are enriched in low complexity.

This sequence belongs to the ribonucleoside diphosphate reductase large chain family. Heterotetramer of two large (R1) and two small (R2) subunits. S.cerevisiae has two different R1 subunits (RNR1 and RNR3) and two different R2 subunits (RNR2 and RNR4). The functional form of the small subunits is a RNR2-RNR4 heterodimer, where RNR2 provides the iron-radical center and RNR4 is required for proper folding of RNR2 and assembly with the large subunits. Under normal growth conditions, the active form of the large subunits is a homodimer of the constitutively expressed RNR1. In damaged cells or cells arrested for DNA synthesis, the reductase consists of multiple species because of the association of the small subunits (RNR2-RNR4) with either the RNR1 homodimer or a heterodimer of RNR1 and the damage-inducible RNR3.

The protein localises to the cytoplasm. It carries out the reaction a 2'-deoxyribonucleoside 5'-diphosphate + [thioredoxin]-disulfide + H2O = a ribonucleoside 5'-diphosphate + [thioredoxin]-dithiol. Its activity is regulated as follows. Under complex allosteric control mediated by deoxynucleoside triphosphates and ATP binding to separate specificity and activation sites on the large subunit. The type of nucleotide bound at the specificity site determines substrate preference. It seems probable that ATP makes the enzyme reduce CDP and UDP, dGTP favors ADP reduction and dTTP favors GDP reduction. Stimulated by ATP and inhibited by dATP binding to the activity site. In terms of biological role, provides the precursors necessary for DNA synthesis. Catalyzes the biosynthesis of deoxyribonucleotides from the corresponding ribonucleotides. In Saccharomyces cerevisiae (strain ATCC 204508 / S288c) (Baker's yeast), this protein is Ribonucleoside-diphosphate reductase large chain 2 (RNR3).